Reading from the N-terminus, the 418-residue chain is MIHSLFLINCSGDIFLEKHWKSVVSQSVCDYFFEAQEKAADVENVPTVISTPHHYLISIYRDKLFFVSVIQTEVPPLFVIEFLHRVADTFQDYFGECSEAAIKDNVVIVYELLEEMLDNGFPLATESNILKELIKPPTILRSVVNSITGSSNVGDTLPTGQLSNIPWRRAGVKYTNNEAYFDVVEEIDAIIDKSGSTVFAEIQGVIDACIKLSGMPDLSLSFMNPRLLDDVSFHPCIRFKRWESERVLSFIPPDGNFRLISYRVSSQNLVAIPVYVKHNISFKENSSCGRFDITIGPKQNMGKTIEGITVTVHMPKVVLNMNLTPTQGSYTFDPVTKVLAWDVGKITPQKLPSLKGLVNLQSGAPKPEENPNLNIQFKIQQLAISGLKVNRLDMYGEKYKPFKGVKYITKAGKFQVRT.

Positions 176-417 (NNEAYFDVVE…ITKAGKFQVR (242 aa)) constitute an MHD domain.

This sequence belongs to the adaptor complexes medium subunit family. Adaptor protein complex 3 (AP-3) is a heterotetramer composed of two large adaptins (delta-type subunit AP3D1 and beta-type subunit AP3B1 or AP3B2), a medium adaptin (mu-type subunit AP3M1 or AP3M2) and a small adaptin (sigma-type subunit APS1 or AP3S2). Interacts with AGAP1. AP-3 associates with the BLOC-1 complex.

It localises to the golgi apparatus. The protein resides in the cytoplasmic vesicle membrane. Its function is as follows. Part of the AP-3 complex, an adaptor-related complex which is not clathrin-associated. The complex is associated with the Golgi region as well as more peripheral structures. It facilitates the budding of vesicles from the Golgi membrane and may be directly involved in trafficking to lysosomes. In concert with the BLOC-1 complex, AP-3 is required to target cargos into vesicles assembled at cell bodies for delivery into neurites and nerve terminals. The sequence is that of AP-3 complex subunit mu-1 (Ap3m1) from Rattus norvegicus (Rat).